Consider the following 78-residue polypeptide: Small ribosomal subunit protein bS18 (78 aa).

It belongs to the bacterial ribosomal protein bS18 family. In terms of assembly, part of the 30S ribosomal subunit. Forms a tight heterodimer with protein bS6.

Binds as a heterodimer with protein bS6 to the central domain of the 16S rRNA, where it helps stabilize the platform of the 30S subunit. The sequence is that of Small ribosomal subunit protein bS18 from Clostridium novyi (strain NT).